Reading from the N-terminus, the 132-residue chain is Agouti-signaling protein (132 aa).

Residues 1-22 form the signal peptide; the sequence is MDVTRLLLATLLVFLCFFTAYS. A glycan (N-linked (GlcNAc...) asparagine) is linked at Asn39. A disordered region spans residues 62–88; sequence ISRKEAEKKRSSKKEASMKKVARPRTP. The span at 63–79 shows a compositional bias: basic and acidic residues; sequence SRKEAEKKRSSKKEASM. 5 disulfide bridges follow: Cys93–Cys108, Cys100–Cys114, Cys107–Cys125, Cys111–Cys132, and Cys116–Cys123. Positions 93–132 constitute an Agouti domain; the sequence is CVATRDSCKPPAPACCDPCASCQCRFFRSACSCRVLSLNC.

Its subcellular location is the secreted. Its function is as follows. Involved in the regulation of melanogenesis. The binding of ASP to MC1R precludes alpha-MSH initiated signaling and thus blocks production of cAMP, leading to a down-regulation of eumelanogenesis (brown/black pigment) and thus increasing synthesis of pheomelanin (yellow/red pigment). The protein is Agouti-signaling protein (ASIP) of Macaca radiata (Bonnet macaque).